We begin with the raw amino-acid sequence, 267 residues long: Hydroxyethylthiazole kinase (267 aa).

Met-44 contributes to the substrate binding site. Positions 120 and 166 each coordinate ATP. Gly-193 is a binding site for substrate.

This sequence belongs to the Thz kinase family. The cofactor is Mg(2+).

It carries out the reaction 5-(2-hydroxyethyl)-4-methylthiazole + ATP = 4-methyl-5-(2-phosphooxyethyl)-thiazole + ADP + H(+). It participates in cofactor biosynthesis; thiamine diphosphate biosynthesis; 4-methyl-5-(2-phosphoethyl)-thiazole from 5-(2-hydroxyethyl)-4-methylthiazole: step 1/1. Functionally, catalyzes the phosphorylation of the hydroxyl group of 4-methyl-5-beta-hydroxyethylthiazole (THZ). The sequence is that of Hydroxyethylthiazole kinase from Desulfitobacterium hafniense (strain DSM 10664 / DCB-2).